A 356-amino-acid chain; its full sequence is Protein HEXIM1 (356 aa).

Composition is skewed to basic and acidic residues over residues 1–11 and 24–47; these read MAEPLLTEHQH and VHEE…DSRW. The disordered stretch occupies residues 1-162; the sequence is MAEPLLTEHQ…RPSKKKRHWK (162 aa). Residues 48-58 show a composition bias toward polar residues; sequence QSRASLQSGSR. A compositionally biased stretch (basic and acidic residues) spans 84–93; it reads SLEKGEKGQN. Phosphoserine is present on residues S98 and S103. Over residues 145-162 the composition is skewed to basic residues; the sequence is LGKKKHRRRPSKKKRHWK. The interval 147-174 is basic region; mediates nuclear localization and interaction with 7SK snRNA and NR3C1; the sequence is KKKHRRRPSKKKRHWKPYYKLTWEEKKK. Residues 199-202 are interaction with P-TEFb; the sequence is PYNT. The segment at 207–247 is autoinhibitory acidic region; in absence of 7SK snRNA interacts with the basic region preventing interaction with P-TEFb and modulating subcellular localization; it reads MDDHDQEEPDLKTGLYPKRAAAKSDDTSDEDFVEEAGEEDG. Positions 210-259 are disordered; it reads HDQEEPDLKTGLYPKRAAAKSDDTSDEDFVEEAGEEDGGSDGMGGDGSEF. S230 carries the phosphoserine modification. At T233 the chain carries Phosphothreonine. Residues 233 to 248 show a composition bias toward acidic residues; sequence TSDEDFVEEAGEEDGG. Phosphoserine occurs at positions 234, 249, and 257. A coiled-coil region spans residues 280 to 346; it reads SKQELIKEYL…LTENELHRQQ (67 aa). Positions 283-311 are mediates interaction with CCNT1; it reads ELIKEYLELEKCLSRKEDENNRLRLESKR. Residues 307 to 352 form a required for inhibition of ESR1-dependent transcription region; it reads LESKRLGGVDARVRELELELDRLRAENLQLLTENELHRQQERAPLS.

Belongs to the HEXIM family. In terms of assembly, homooligomer and heterooligomer with HEXIM2; probably dimeric. Core component of the 7SK RNP complex, at least composed of 7SK RNA, LARP7, MEPCE, HEXIM1 (or HEXIM2) and P-TEFb (composed of CDK9 and CCNT1/cyclin-T1). Interacts with the N-CoR complex through NCOR1. Interacts with ESR1 and NR3C1. May interact with NF-kappa-B through RELA. Interacts with CCNT2; mediates formation of a tripartite complex with KPNA2. Part of the HDP-RNP complex composed of at least HEXIM1, PRKDC, XRCC5, XRCC6, paraspeckle proteins (SFPQ, NONO, PSPC1, RBM14, and MATR3) and NEAT1 non-coding RNA. As to expression, widely expressed with higher expression in heart, skeletal muscle and brain (at protein level).

Its subcellular location is the nucleus. It localises to the cytoplasm. In terms of biological role, transcriptional regulator which functions as a general RNA polymerase II transcription inhibitor. Core component of the 7SK RNP complex: in cooperation with 7SK snRNA sequesters P-TEFb in a large inactive 7SK snRNP complex preventing RNA polymerase II phosphorylation and subsequent transcriptional elongation. May also regulate NF-kappa-B, ESR1, NR3C1 and CIITA-dependent transcriptional activity. Plays a role in the regulation of DNA virus-mediated innate immune response by assembling into the HDP-RNP complex, a complex that serves as a platform for IRF3 phosphorylation and subsequent innate immune response activation through the cGAS-STING pathway. The chain is Protein HEXIM1 (Hexim1) from Mus musculus (Mouse).